Here is a 644-residue protein sequence, read N- to C-terminus: 1-deoxy-D-xylulose-5-phosphate synthase (644 aa).

Thiamine diphosphate-binding positions include His-78 and Gly-120–Ala-122. Asp-150 contributes to the Mg(2+) binding site. Thiamine diphosphate contacts are provided by residues Ala-151–Ala-152, Asn-179, and Glu-374. A Mg(2+)-binding site is contributed by Asn-179.

This sequence belongs to the transketolase family. DXPS subfamily. In terms of assembly, homodimer. The cofactor is Mg(2+). Requires thiamine diphosphate as cofactor.

The catalysed reaction is D-glyceraldehyde 3-phosphate + pyruvate + H(+) = 1-deoxy-D-xylulose 5-phosphate + CO2. It functions in the pathway metabolic intermediate biosynthesis; 1-deoxy-D-xylulose 5-phosphate biosynthesis; 1-deoxy-D-xylulose 5-phosphate from D-glyceraldehyde 3-phosphate and pyruvate: step 1/1. Functionally, catalyzes the acyloin condensation reaction between C atoms 2 and 3 of pyruvate and glyceraldehyde 3-phosphate to yield 1-deoxy-D-xylulose-5-phosphate (DXP). This Chlamydia pneumoniae (Chlamydophila pneumoniae) protein is 1-deoxy-D-xylulose-5-phosphate synthase.